A 223-amino-acid chain; its full sequence is N-terminal Xaa-Pro-Lys N-methyltransferase 1 (223 aa).

An N-acetylmethionine modification is found at methionine 1. Threonine 2 is modified (N-acetylthreonine; in N-terminal Xaa-Pro-Lys N-methyltransferase 1, N-terminally processed). S-adenosyl-L-methionine-binding positions include glycine 69, arginine 74, 91 to 93 (DVT), 119 to 120 (LQ), and glutamine 135.

The protein belongs to the methyltransferase superfamily. NTM1 family.

The protein resides in the nucleus. It carries out the reaction N-terminal L-alanyl-L-prolyl-L-lysyl-[protein] + 3 S-adenosyl-L-methionine = N-terminal N,N,N-trimethyl-L-alanyl-L-prolyl-L-lysyl-[protein] + 3 S-adenosyl-L-homocysteine + 3 H(+). The catalysed reaction is N-terminal L-seryl-L-prolyl-L-lysyl-[protein] + 3 S-adenosyl-L-methionine = N-terminal N,N,N-trimethyl-L-seryl-L-prolyl-L-lysyl-[protein] + 3 S-adenosyl-L-homocysteine + 3 H(+). It catalyses the reaction N-terminal L-prolyl-L-prolyl-L-lysyl-[protein] + 2 S-adenosyl-L-methionine = N-terminal N,N-dimethyl-L-prolyl-L-prolyl-L-lysyl-[protein] + 2 S-adenosyl-L-homocysteine + 2 H(+). Functionally, distributive alpha-N-methyltransferase that methylates the N-terminus of target proteins containing the N-terminal motif [Ala/Gly/Pro/Ser]-Pro-Lys when the initiator Met is cleaved. Specifically catalyzes mono-, di- or tri-methylation of the exposed alpha-amino group of the Ala, Gly or Ser residue in the [Ala/Gly/Ser]-Pro-Lys motif and mono- or di-methylation of Pro in the Pro-Pro-Lys motif. Some of the substrates may be primed by NTMT2-mediated monomethylation. Catalyzes the trimethylation of the N-terminal Gly in CENPA (after removal of Met-1). Responsible for the N-terminal methylation of KLHL31, MYL2, MYL3, RB1, RCC1, RPL23A and SET. Required during mitosis for normal bipolar spindle formation and chromosome segregation via its action on RCC1. In Rattus norvegicus (Rat), this protein is N-terminal Xaa-Pro-Lys N-methyltransferase 1 (Ntmt1).